The following is a 201-amino-acid chain: Lipopolysaccharide core heptose(II)-phosphate phosphatase (201 aa).

Positions 1–35 are cleaved as a signal peptide; the sequence is MLAFTLRFIKNKRYLATLAGALVIIAGLTSQHAWS.

Belongs to the phosphoglycerate mutase family. Ais subfamily.

The protein localises to the periplasm. Its pathway is bacterial outer membrane biogenesis; lipopolysaccharide metabolism. Functionally, catalyzes the dephosphorylation of heptose(II) of the outer membrane lipopolysaccharide core. The polypeptide is Lipopolysaccharide core heptose(II)-phosphate phosphatase (Salmonella newport (strain SL254)).